The sequence spans 151 residues: 6,7-dimethyl-8-ribityllumazine synthase (151 aa).

5-amino-6-(D-ribitylamino)uracil contacts are provided by residues Phe18, 49-51 (ALE), and 74-76 (CVI). A (2S)-2-hydroxy-3-oxobutyl phosphate-binding site is contributed by 79–80 (ET). The active-site Proton donor is His82. Asn107 is a binding site for 5-amino-6-(D-ribitylamino)uracil. Position 121 (Arg121) interacts with (2S)-2-hydroxy-3-oxobutyl phosphate.

This sequence belongs to the DMRL synthase family.

It catalyses the reaction (2S)-2-hydroxy-3-oxobutyl phosphate + 5-amino-6-(D-ribitylamino)uracil = 6,7-dimethyl-8-(1-D-ribityl)lumazine + phosphate + 2 H2O + H(+). The protein operates within cofactor biosynthesis; riboflavin biosynthesis; riboflavin from 2-hydroxy-3-oxobutyl phosphate and 5-amino-6-(D-ribitylamino)uracil: step 1/2. Catalyzes the formation of 6,7-dimethyl-8-ribityllumazine by condensation of 5-amino-6-(D-ribitylamino)uracil with 3,4-dihydroxy-2-butanone 4-phosphate. This is the penultimate step in the biosynthesis of riboflavin. The sequence is that of 6,7-dimethyl-8-ribityllumazine synthase from Bartonella tribocorum (strain CIP 105476 / IBS 506).